Reading from the N-terminus, the 293-residue chain is Glutamyl-Q tRNA(Asp) synthetase (293 aa).

Residues 26–30 and Asp-62 each bind L-glutamate; that span reads RFAPS. A 'HIGH' region motif is present at residues 29 to 39; the sequence is PSPTGLLHLGN. Positions 118, 120, 131, and 135 each coordinate Zn(2+). L-glutamate is bound by residues Tyr-178 and Arg-196. The 'KMSKS' region motif lies at 234–238; it reads KLSKR. Lys-237 serves as a coordination point for ATP.

It belongs to the class-I aminoacyl-tRNA synthetase family. GluQ subfamily. Zn(2+) serves as cofactor.

Its function is as follows. Catalyzes the tRNA-independent activation of glutamate in presence of ATP and the subsequent transfer of glutamate onto a tRNA(Asp). Glutamate is transferred on the 2-amino-5-(4,5-dihydroxy-2-cyclopenten-1-yl) moiety of the queuosine in the wobble position of the QUC anticodon. The polypeptide is Glutamyl-Q tRNA(Asp) synthetase (Synechococcus sp. (strain CC9605)).